Here is a 339-residue protein sequence, read N- to C-terminus: Cyclin-Y-like protein 1 (339 aa).

Positions 181 to 263 (QLTAECAIVT…FLELLQFNIN (83 aa)) constitute a Cyclin N-terminal domain.

Belongs to the cyclin family. Cyclin Y subfamily.

It is found in the cell membrane. Its function is as follows. Key regulator of Wnt signaling implicated in various biological processes such as embryonic neurogenesis. The chain is Cyclin-Y-like protein 1 (ccnyl1) from Danio rerio (Zebrafish).